The chain runs to 358 residues: Peptide chain release factor 1 (358 aa).

Residue Gln-233 is modified to N5-methylglutamine.

It belongs to the prokaryotic/mitochondrial release factor family. Methylated by PrmC. Methylation increases the termination efficiency of RF1.

The protein resides in the cytoplasm. Peptide chain release factor 1 directs the termination of translation in response to the peptide chain termination codons UAG and UAA. This Staphylococcus haemolyticus (strain JCSC1435) protein is Peptide chain release factor 1.